The sequence spans 353 residues: Protein RecA (353 aa).

64–71 contributes to the ATP binding site; it reads GPESSGKT. The interval 331 to 353 is disordered; that stretch reads LEEASAQKEEVPVEDKLFDDELE. Basic and acidic residues predominate over residues 335–346; that stretch reads SAQKEEVPVEDK.

It belongs to the RecA family.

Its subcellular location is the cytoplasm. Its function is as follows. Can catalyze the hydrolysis of ATP in the presence of single-stranded DNA, the ATP-dependent uptake of single-stranded DNA by duplex DNA, and the ATP-dependent hybridization of homologous single-stranded DNAs. It interacts with LexA causing its activation and leading to its autocatalytic cleavage. This is Protein RecA from Macrococcus caseolyticus (strain JCSC5402) (Macrococcoides caseolyticum).